A 306-amino-acid polypeptide reads, in one-letter code: Solute carrier family 25 member 48 (306 aa).

Solcar repeat units follow at residues 3 to 86 (SFQL…TQRF), 101 to 200 (RSLS…LSEW), and 209 to 296 (PSPY…SLKA). The next 6 helical transmembrane spans lie at 9 to 29 (FVAG…LDTV), 61 to 81 (GMSF…GVFS), 107 to 127 (LLAS…VELI), 184 to 204 (IPGY…ITPE), 212 to 232 (YAAW…ATPM), and 272 to 290 (ITVN…FLGY).

It belongs to the mitochondrial carrier (TC 2.A.29) family.

It is found in the mitochondrion inner membrane. This Mus musculus (Mouse) protein is Solute carrier family 25 member 48 (Slc25a48).